The sequence spans 326 residues: Vitamin B12 import system permease protein BtuC (326 aa).

The next 9 helical transmembrane spans lie at 17–39 (LSLSLLVLLATLLSLCAGEQWIA), 59–81 (RTLAVLLVGAALALSGAVMQALF), 88–107 (PGLLGVSNGAGVGLIAAVLL), 111–133 (QLAGWALGLCAIAGALIITLILL), 146–168 (LLAGVALGIICSALMTWAIYFST), 188–205 (WQQSWLMIALIPVLIWIC), 242–264 (MVGVSVAMAGAIGFIGLVIPHIL), 274–296 (VLLPGCALAGAIALLLADVVARL), and 303–322 (LPIGVVTATLGAPVFIWLLL).

The protein belongs to the binding-protein-dependent transport system permease family. FecCD subfamily. In terms of assembly, the complex is composed of two ATP-binding proteins (BtuD), two transmembrane proteins (BtuC) and a solute-binding protein (BtuF).

The protein resides in the cell inner membrane. Part of the ABC transporter complex BtuCDF involved in vitamin B12 import. Involved in the translocation of the substrate across the membrane. This is Vitamin B12 import system permease protein BtuC from Salmonella paratyphi A (strain ATCC 9150 / SARB42).